The primary structure comprises 208 residues: MIAFVSGPVAALAPTTAVIEVGGIGMAVQCTPHTLADLRVGREARLATSLVVREDSLTLYGFANDDERQVFELLQTASGVGPRLAQAMLATHSPDALRLAVSTGDEKALTAVSGIGKKGAQKLLLELKDRLGEPVGAHIGQQGIGTPVTSGWRDQLQAALIGLGYASREADEAVNAVAPQAEAAVAEGTAPPVPQLLRAALQTLNRAR.

The segment at 1–63 (MIAFVSGPVA…EDSLTLYGFA (63 aa)) is domain I. The segment at 64 to 142 (NDDERQVFEL…EPVGAHIGQQ (79 aa)) is domain II. The interval 143-147 (GIGTP) is flexible linker. Residues 148 to 208 (VTSGWRDQLQ…AALQTLNRAR (61 aa)) form a domain III region.

This sequence belongs to the RuvA family. Homotetramer. Forms an RuvA(8)-RuvB(12)-Holliday junction (HJ) complex. HJ DNA is sandwiched between 2 RuvA tetramers; dsDNA enters through RuvA and exits via RuvB. An RuvB hexamer assembles on each DNA strand where it exits the tetramer. Each RuvB hexamer is contacted by two RuvA subunits (via domain III) on 2 adjacent RuvB subunits; this complex drives branch migration. In the full resolvosome a probable DNA-RuvA(4)-RuvB(12)-RuvC(2) complex forms which resolves the HJ.

The protein resides in the cytoplasm. Its function is as follows. The RuvA-RuvB-RuvC complex processes Holliday junction (HJ) DNA during genetic recombination and DNA repair, while the RuvA-RuvB complex plays an important role in the rescue of blocked DNA replication forks via replication fork reversal (RFR). RuvA specifically binds to HJ cruciform DNA, conferring on it an open structure. The RuvB hexamer acts as an ATP-dependent pump, pulling dsDNA into and through the RuvAB complex. HJ branch migration allows RuvC to scan DNA until it finds its consensus sequence, where it cleaves and resolves the cruciform DNA. This chain is Holliday junction branch migration complex subunit RuvA, found in Streptomyces griseus subsp. griseus (strain JCM 4626 / CBS 651.72 / NBRC 13350 / KCC S-0626 / ISP 5235).